We begin with the raw amino-acid sequence, 37 residues long: Large ribosomal subunit protein bL36c (37 aa).

This sequence belongs to the bacterial ribosomal protein bL36 family.

Its subcellular location is the plastid. The protein resides in the chloroplast. The protein is Large ribosomal subunit protein bL36c (rpl36) of Nephroselmis olivacea (Green alga).